We begin with the raw amino-acid sequence, 244 residues long: uncharacterized protein (244 aa).

The interval 1–127 (MSGPQGSDPR…YPGQYGPYGQ (127 aa)) is disordered. The span at 34–43 (WQQQPTQEAT) shows a compositional bias: polar residues. Low complexity-rich tracts occupy residues 45–75 (QAPAYTPQYQQPADPAYPQQYPQPTPGYAQP) and 88–127 (PGQYGQYQQPGQYGQPGQYGQPGQYAPPGQYPGQYGPYGQ). Residues 136-156 (VAVIGGVIAVMAVLFIGAVLI) traverse the membrane as a helical segment.

The protein resides in the membrane. This is an uncharacterized protein from Mycobacterium tuberculosis (strain CDC 1551 / Oshkosh).